Reading from the N-terminus, the 141-residue chain is Endoribonuclease YbeY (141 aa).

His-105, His-109, and Asp-115 together coordinate Zn(2+).

Belongs to the endoribonuclease YbeY family. The cofactor is Zn(2+).

It localises to the cytoplasm. In terms of biological role, single strand-specific metallo-endoribonuclease involved in late-stage 70S ribosome quality control and in maturation of the 3' terminus of the 16S rRNA. This Chlorobaculum parvum (strain DSM 263 / NCIMB 8327) (Chlorobium vibrioforme subsp. thiosulfatophilum) protein is Endoribonuclease YbeY.